Consider the following 535-residue polypeptide: Dimethylaniline monooxygenase [N-oxide-forming] 2 (535 aa).

The residue at position 2 (Ala2) is an N-acetylalanine. FAD contacts are provided by residues 9 to 13 (GAGVS), Glu32, 40 to 41 (VW), and 61 to 62 (NT). NADP(+) is bound by residues 60–61 (TN) and 195–198 (SGSD). Lys492 participates in a covalent cross-link: Glycyl lysine isopeptide (Lys-Gly) (interchain with G-Cter in SUMO). Residues 510 to 530 (FPVSFLLKILGLVAVVVAFFC) form a helical membrane-spanning segment.

It belongs to the FMO family. The cofactor is FAD. Mg(2+) serves as cofactor.

Its subcellular location is the microsome membrane. The protein resides in the endoplasmic reticulum membrane. The catalysed reaction is N,N-dimethylaniline + NADPH + O2 + H(+) = N,N-dimethylaniline N-oxide + NADP(+) + H2O. Catalyzes the oxidative metabolism of numerous xenobiotics, including mainly therapeutic drugs and insecticides that contain a soft nucleophile, most commonly nitrogen and sulfur and participates to their bioactivation. In Macaca mulatta (Rhesus macaque), this protein is Dimethylaniline monooxygenase [N-oxide-forming] 2.